A 387-amino-acid chain; its full sequence is Large ribosomal subunit protein uL3 (387 aa).

The protein belongs to the universal ribosomal protein uL3 family.

Its subcellular location is the cytoplasm. The polypeptide is Large ribosomal subunit protein uL3 (RPL3) (Candida glabrata (strain ATCC 2001 / BCRC 20586 / JCM 3761 / NBRC 0622 / NRRL Y-65 / CBS 138) (Yeast)).